The following is a 211-amino-acid chain: DNA/RNA-binding protein ALBA2 (211 aa).

Positions 84–99 (NSGLKKNAKNEDKKSG) are enriched in basic and acidic residues. The disordered stretch occupies residues 84-121 (NSGLKKNAKNEDKKSGDEEEEEEEEEEDEENNKNKEAN). Over residues 100-113 (DEEEEEEEEEEDEE) the composition is skewed to acidic residues.

This sequence belongs to the histone-like Alba family. Identified in a TARE6-associated complex consisting of over 30 proteins and including ALBA1, ALBA2 and ALBA4; the complex binds to the non-coding subtelomeric repeat region TARE6.

The protein resides in the nucleus. It is found in the chromosome. Its subcellular location is the telomere. It localises to the cytoplasm. Its function is as follows. Possesses DNA- and RNA-binding activities. Binds to DNA with relaxed sequence specificity. Associates with the subtelomeric TARE6 repeats. The sequence is that of DNA/RNA-binding protein ALBA2 from Plasmodium falciparum (isolate 3D7).